A 433-amino-acid polypeptide reads, in one-letter code: UPF0761 membrane protein Sde_0901 (433 aa).

The next 6 helical transmembrane spans lie at 46–66 (LFAMVPLMAVFYSMFSMFPAF), 103–123 (LSAAGAGLLVVTAYLMLTNIE), 142–162 (FLLYWAVLTIGPLLLGAGLAM), 185–205 (FFSYLPLFTTSAAFTLLFAAV), 217–237 (IGGILTAVCFELLKIGFGWVV), and 247–267 (GAFAVVPLFLLWVNLLWMIIL).

This sequence belongs to the UPF0761 family.

It localises to the cell inner membrane. The sequence is that of UPF0761 membrane protein Sde_0901 from Saccharophagus degradans (strain 2-40 / ATCC 43961 / DSM 17024).